A 141-amino-acid chain; its full sequence is ATP synthase epsilon chain (141 aa).

Belongs to the ATPase epsilon chain family. In terms of assembly, F-type ATPases have 2 components, CF(1) - the catalytic core - and CF(0) - the membrane proton channel. CF(1) has five subunits: alpha(3), beta(3), gamma(1), delta(1), epsilon(1). CF(0) has three main subunits: a, b and c.

Its subcellular location is the cell inner membrane. Produces ATP from ADP in the presence of a proton gradient across the membrane. The chain is ATP synthase epsilon chain from Methylobacillus flagellatus (strain ATCC 51484 / DSM 6875 / VKM B-1610 / KT).